Consider the following 1383-residue polypeptide: MSGTSSHESFYDSLSDMQEESKNTDFFPGLSAFLSQEEINKSLDLARRAIADSETEDFDSEKEISQIFSTSPASLCEHPSHKETKLGEHASRRPQDNRSTPVQPLAEKQTKSISSPVSKRKPAMSPLLTRPSYIRSLRKAEKRGAKTPSTNVKPKTPHQRKGGPQSQLCDKAANLIEELTSIFKAAKPRNRSPNGESSSPDSGYLSPKNQPSALLSASASQSPMEDQGEMEREVKSPGARHCYQDNQDLAVPHNRKSHPQPHSALHFPAAPRFIQKLRSQEVAEGSRVYLECRVTGNPTPRVRWFCEGKELHNTPDIQIHCEGGDLHTLIIAEAFEDDTGRYTCLATNPSGSDTTSAEVFIEGASSTDSDSESLAFKSRAGAMPQAQKKTTSVSLTIGSSSPKTGVTTAVIQPLSVPVQQVHSPTSYLCRPDGTTTAYFPPVFTKELQNTAVAEGQVVVLECRVRGAPPLQVQWFRQGSEIQDSPDFRILQKKPRSTAEPEEICTLVIAETFPEDAGIFTCSARNDYGSATSTAQLVVTSANTENCSYESMGESNNDHFQHFPPPPPILETSSLELASKKPSEIQQVNNPELGLSRAALQMQFNAAERETNGVHPSRGVNGLINGKANSNKSLPTPAVLLSPTKEPPPLLAKPKLDPLKLQQLQNQIRLEQEAGARQPPPAPRSAPPSPPFPPPPAFPELAACTPPASPEPMSALASRSAPAMQSSGSFNYARPKQFIAAQNLGPASGHGTPASSPSSSSLPSPMSPTPRQFGRAPVPPFAQPFGAEPEAPWGSSSPSPPPPPPPVFSPTAAFPVPDVFPLPPPPPPLPSPGQASHCSSPATRFGHSQTPAAFLSALLPSQPPPAAVNALGLPKGVTPAGFPKKASRTARIASDEEIQGTKDAVIQDLERKLRFKEDLLNNGQPRLTYEERMARRLLGADSATVFNIQEPEEETANQEYKVSSCEQRLISEIEYRLERSPVDESGDEVQYGDVPVENGMAPFFEMKLKHYKIFEGMPVTFTCRVAGNPKPKIYWFKDGKQISPKSDHYTIQRDLDGTCSLHTTASTLDDDGNYTIMAANPQGRISCTGRLMVQAVNQRGRSPRSPSGHPHVRRPRSRSRDSGDENEPIQERFFRPHFLQAPGDLTVQEGKLCRMDCKVSGLPTPDLSWQLDGKPVRPDSAHKMLVRENGVHSLIIEPVTSRDAGIYTCIATNRAGQNSFSLELVVAAKEAHKPPVFIEKLQNTGVADGYPVRLECRVLGVPPPQIFWKKENESLTHSTDRVSMHQDNHGYICLLIQGATKEDAGWYTVSAKNEAGIVSCTARLDVYTQWHQQSQSTKPKKVRPSASRYAALSDQGLDIKAAFQPEANPSHLTLNTALVESEDL.

Disordered stretches follow at residues 1–22 (MSGTSSHESFYDSLSDMQEESK), 52–169 (DSET…SQLC), and 183–238 (FKAA…KSPG). Residues 78 to 96 (HPSHKETKLGEHASRRPQD) show a composition bias toward basic and acidic residues. The span at 191-201 (RSPNGESSSPD) shows a compositional bias: polar residues. S192 bears the Phosphoserine mark. Residues 210 to 223 (QPSALLSASASQSP) are compositionally biased toward low complexity. Residues 271–360 (PRFIQKLRSQ…GSDTTSAEVF (90 aa)) enclose the Ig-like C2-type 1 domain. C292 and C344 are disulfide-bonded. S401 is modified (phosphoserine). Positions 440–539 (PPVFTKELQN…ATSTAQLVVT (100 aa)) constitute an Ig-like C2-type 2 domain. A disulfide bridge links C462 with C521. Residues 562–566 (FPPPP) form an interaction with VASP region. Disordered stretches follow at residues 609 to 653 (ETNG…LAKP), 673 to 728 (AGAR…SSGS), and 740 to 846 (AQNL…RFGH). S632 is subject to Phosphoserine. T635 carries the post-translational modification Phosphothreonine. A Phosphoserine modification is found at S641. An interaction with LASP1 region spans residues 646-676 (PPPLLAKPKLDPLKLQQLQNQIRLEQEAGAR). An interaction with SORBS2, SPIN90 and SRC region spans residues 676-696 (RQPPPAPRSAPPSPPFPPPPA). The span at 677 to 697 (QPPPAPRSAPPSPPFPPPPAF) shows a compositional bias: pro residues. Phosphoserine occurs at positions 684, 688, and 728. The segment covering 745–763 (PASGHGTPASSPSSSSLPS) has biased composition (low complexity). The segment at 766–831 (SPTPRQFGRA…PPPPPPLPSP (66 aa)) is interaction with EPS8. An interaction with SORBS2, SPIN90, SRC and PFN1 region spans residues 796 to 831 (SPSPPPPPPPVFSPTAAFPVPDVFPLPPPPPPLPSP). Pro residues-rich tracts occupy residues 797-807 (PSPPPPPPPVF) and 817-830 (DVFPLPPPPPPLPS). Positions 819–823 (FPLPP) are interaction with VASP. The span at 832 to 846 (GQASHCSSPATRFGH) shows a compositional bias: polar residues. Positions 833–890 (QASHCSSPATRFGHSQTPAAFLSALLPSQPPPAAVNALGLPKGVTPAGFPKKASRTAR) are interaction with ACTN. A phosphoserine mark is found at S893, S979, and S984. The 85-residue stretch at 1001 to 1085 (PFFEMKLKHY…MAANPQGRIS (85 aa)) folds into the Ig-like C2-type 3 domain. The disordered stretch occupies residues 1096 to 1125 (NQRGRSPRSPSGHPHVRRPRSRSRDSGDEN). Over residues 1098-1108 (RGRSPRSPSGH) the composition is skewed to low complexity. A phosphoserine mark is found at S1101, S1104, S1106, and S1116. At S1118 the chain carries Phosphoserine; by PKB/AKT1. The residue at position 1121 (S1121) is a Phosphoserine. Ig-like C2-type domains are found at residues 1135–1226 (PHFL…LVVA) and 1233–1324 (PPVF…ARLD). Interaction with EZR stretches follow at residues 1137-1226 (FLQA…LVVA) and 1236-1326 (FIEK…LDVY). C1156 and C1208 are joined by a disulfide. S1352 carries the phosphoserine modification.

It belongs to the myotilin/palladin family. In terms of assembly, interacts with EPS8. Interacts with LASP1. Interacts with VASP. Interacts with ACTN. Interacts with SORBS2. Interacts with PFN1. Interacts with LPP. Interacts with SPIN90. Interacts with SRC. Interacts with EZR. Interacts with RAI14. Post-translationally, phosphorylated predominantly on serines and, to a lesser extent, on tyrosines. Phosphorylation at Ser-1118 by PKB/AKT1 modulates cytoskeletal organization and cell motility. As to expression, detected in both muscle and non-muscle tissues. High expression in prostate, ovary, colon, and kidney. Not detected in spleen, skeletal muscle, lung and peripheral blood lymphocytes (at protein level). Protein is overexpressed in FA6, HPAF, IMIM-PC2, SUIT-2 and PancTu-II sporadic pancreatic cancer cell lines.

Its subcellular location is the cytoplasm. It localises to the cytoskeleton. The protein resides in the cell junction. It is found in the focal adhesion. The protein localises to the myofibril. Its subcellular location is the sarcomere. It localises to the z line. The protein resides in the cell projection. It is found in the ruffle. The protein localises to the podosome. Its subcellular location is the lamellipodium. It localises to the axon. The protein resides in the growth cone. Cytoskeletal protein required for organization of normal actin cytoskeleton. Roles in establishing cell morphology, motility, cell adhesion and cell-extracellular matrix interactions in a variety of cell types. May function as a scaffolding molecule with the potential to influence both actin polymerization and the assembly of existing actin filaments into higher-order arrays. Binds to proteins that bind to either monomeric or filamentous actin. Localizes at sites where active actin remodeling takes place, such as lamellipodia and membrane ruffles. Different isoforms may have functional differences. Involved in the control of morphological and cytoskeletal changes associated with dendritic cell maturation. Involved in targeting ACTN to specific subcellular foci. In Homo sapiens (Human), this protein is Palladin (PALLD).